We begin with the raw amino-acid sequence, 162 residues long: Nucleotide-binding protein ABSDF0503 (162 aa).

The protein belongs to the YajQ family.

Functionally, nucleotide-binding protein. The polypeptide is Nucleotide-binding protein ABSDF0503 (Acinetobacter baumannii (strain SDF)).